We begin with the raw amino-acid sequence, 435 residues long: Tol-Pal system protein TolB (435 aa).

Residues 1–20 form the signal peptide; the sequence is MRKIIAGVFIFVFLISNLYA.

This sequence belongs to the TolB family. As to quaternary structure, the Tol-Pal system is composed of five core proteins: the inner membrane proteins TolA, TolQ and TolR, the periplasmic protein TolB and the outer membrane protein Pal. They form a network linking the inner and outer membranes and the peptidoglycan layer.

It is found in the periplasm. Part of the Tol-Pal system, which plays a role in outer membrane invagination during cell division and is important for maintaining outer membrane integrity. The sequence is that of Tol-Pal system protein TolB from Francisella tularensis subsp. mediasiatica (strain FSC147).